A 180-amino-acid polypeptide reads, in one-letter code: METEVHEAAGAAGHAGQAVGMPQLNFDYWPNQIFWLLVTLVAIYFLLTRVALPRIGAVLAERRGTITNDLAAAEELKQKAVLAEKAYNEALAKARAEAQAIVAETRAAIQAELDEATAKADAEISAKSAESEARIAEIRAGALQSVSEVAKDTAEALVAALGGKSDAAAVDAAVAARMKG.

Residues I33–P53 form a helical membrane-spanning segment.

Belongs to the ATPase B chain family. As to quaternary structure, F-type ATPases have 2 components, F(1) - the catalytic core - and F(0) - the membrane proton channel. F(1) has five subunits: alpha(3), beta(3), gamma(1), delta(1), epsilon(1). F(0) has three main subunits: a(1), b(2) and c(10-14). The alpha and beta chains form an alternating ring which encloses part of the gamma chain. F(1) is attached to F(0) by a central stalk formed by the gamma and epsilon chains, while a peripheral stalk is formed by the delta and b chains.

It localises to the cell inner membrane. In terms of biological role, f(1)F(0) ATP synthase produces ATP from ADP in the presence of a proton or sodium gradient. F-type ATPases consist of two structural domains, F(1) containing the extramembraneous catalytic core and F(0) containing the membrane proton channel, linked together by a central stalk and a peripheral stalk. During catalysis, ATP synthesis in the catalytic domain of F(1) is coupled via a rotary mechanism of the central stalk subunits to proton translocation. Functionally, component of the F(0) channel, it forms part of the peripheral stalk, linking F(1) to F(0). The b'-subunit is a diverged and duplicated form of b found in plants and photosynthetic bacteria. This is ATP synthase subunit b 2 (atpF2) from Cereibacter sphaeroides (strain ATCC 17029 / ATH 2.4.9) (Rhodobacter sphaeroides).